The following is a 547-amino-acid chain: Chaperonin GroEL (547 aa).

Residues Thr29–Pro32, Lys50, Asp86–Thr90, Gly414, Asn477–Ala479, and Asp493 contribute to the ATP site.

It belongs to the chaperonin (HSP60) family. Forms a cylinder of 14 subunits composed of two heptameric rings stacked back-to-back. Interacts with the co-chaperonin GroES.

The protein resides in the cytoplasm. It carries out the reaction ATP + H2O + a folded polypeptide = ADP + phosphate + an unfolded polypeptide.. In terms of biological role, together with its co-chaperonin GroES, plays an essential role in assisting protein folding. The GroEL-GroES system forms a nano-cage that allows encapsulation of the non-native substrate proteins and provides a physical environment optimized to promote and accelerate protein folding. This chain is Chaperonin GroEL, found in Campylobacter rectus (Wolinella recta).